Reading from the N-terminus, the 707-residue chain is Polyribonucleotide nucleotidyltransferase (707 aa).

2 residues coordinate Mg(2+): aspartate 486 and aspartate 492. Residues 553–612 (PRIHKIKINPEKIKDVIGKGGSVIRMLTEETGTIIEIEDDGTIKISATIGEKAKNAIRRI) form the KH domain. The S1 motif domain maps to 622–690 (GRIYSGKVTR…RQGRLRLSIK (69 aa)).

The protein belongs to the polyribonucleotide nucleotidyltransferase family. In terms of assembly, component of the RNA degradosome, which is a multiprotein complex involved in RNA processing and mRNA degradation. It depends on Mg(2+) as a cofactor.

Its subcellular location is the cytoplasm. It catalyses the reaction RNA(n+1) + phosphate = RNA(n) + a ribonucleoside 5'-diphosphate. In terms of biological role, involved in mRNA degradation. Catalyzes the phosphorolysis of single-stranded polyribonucleotides processively in the 3'- to 5'-direction. In Buchnera aphidicola subsp. Schizaphis graminum (strain Sg), this protein is Polyribonucleotide nucleotidyltransferase.